The following is a 506-amino-acid chain: RNA-splicing ligase RtcB homolog (506 aa).

The Mn(2+) site is built by aspartate 120, cysteine 123, histidine 228, histidine 260, and histidine 354. 227–231 (NHYAE) contributes to the GMP binding site. GMP is bound by residues 354–355 (HN), 403–406 (GGTM), serine 410, 429–432 (HGAG), and lysine 505. Catalysis depends on histidine 429, which acts as the GMP-histidine intermediate.

This sequence belongs to the RtcB family. As to quaternary structure, catalytic component of the tRNA-splicing ligase complex. Requires Mn(2+) as cofactor.

The enzyme catalyses a 3'-end 3'-phospho-ribonucleotide-RNA + a 5'-end dephospho-ribonucleoside-RNA + GTP = a ribonucleotidyl-ribonucleotide-RNA + GMP + diphosphate. It catalyses the reaction a 3'-end 2',3'-cyclophospho-ribonucleotide-RNA + a 5'-end dephospho-ribonucleoside-RNA + GTP + H2O = a ribonucleotidyl-ribonucleotide-RNA + GMP + diphosphate + H(+). Its function is as follows. Catalytic subunit of the tRNA-splicing ligase complex that acts by directly joining spliced tRNA halves to mature-sized tRNAs by incorporating the precursor-derived splice junction phosphate into the mature tRNA as a canonical 3',5'-phosphodiester. May act as an RNA ligase with broad substrate specificity, and may function toward other RNAs. The protein is RNA-splicing ligase RtcB homolog of Drosophila melanogaster (Fruit fly).